A 776-amino-acid chain; its full sequence is LPS-assembly protein LptD (776 aa).

A signal peptide spans 1-24; the sequence is MQHFSRTFLAASIATALFAPYAQA.

It belongs to the LptD family. Component of the lipopolysaccharide transport and assembly complex. Interacts with LptE and LptA.

Its subcellular location is the cell outer membrane. Its function is as follows. Together with LptE, is involved in the assembly of lipopolysaccharide (LPS) at the surface of the outer membrane. The protein is LPS-assembly protein LptD of Vibrio vulnificus (strain CMCP6).